The sequence spans 189 residues: Peptidyl-tRNA hydrolase (189 aa).

A tRNA-binding site is contributed by Tyr18. Residue His23 is the Proton acceptor of the active site. Residues Phe67, Asn69, and Asn115 each contribute to the tRNA site.

It belongs to the PTH family. As to quaternary structure, monomer.

The protein resides in the cytoplasm. The catalysed reaction is an N-acyl-L-alpha-aminoacyl-tRNA + H2O = an N-acyl-L-amino acid + a tRNA + H(+). Functionally, hydrolyzes ribosome-free peptidyl-tRNAs (with 1 or more amino acids incorporated), which drop off the ribosome during protein synthesis, or as a result of ribosome stalling. Catalyzes the release of premature peptidyl moieties from peptidyl-tRNA molecules trapped in stalled 50S ribosomal subunits, and thus maintains levels of free tRNAs and 50S ribosomes. This Leptospira borgpetersenii serovar Hardjo-bovis (strain JB197) protein is Peptidyl-tRNA hydrolase.